The following is a 466-amino-acid chain: 23S rRNA (uracil(1939)-C(5))-methyltransferase RlmD (466 aa).

The 54-residue stretch at M1–E54 folds into the TRAM domain. Residues C67, C73, C76, and C155 each contribute to the [4Fe-4S] cluster site. The S-adenosyl-L-methionine site is built by Q264, F293, N298, E314, N342, and D363. The Nucleophile role is filled by C393.

Belongs to the class I-like SAM-binding methyltransferase superfamily. RNA M5U methyltransferase family. RlmD subfamily.

It catalyses the reaction uridine(1939) in 23S rRNA + S-adenosyl-L-methionine = 5-methyluridine(1939) in 23S rRNA + S-adenosyl-L-homocysteine + H(+). Catalyzes the formation of 5-methyl-uridine at position 1939 (m5U1939) in 23S rRNA. The protein is 23S rRNA (uracil(1939)-C(5))-methyltransferase RlmD of Bordetella parapertussis (strain 12822 / ATCC BAA-587 / NCTC 13253).